Here is a 132-residue protein sequence, read N- to C-terminus: Peptide methionine sulfoxide reductase MsrB (132 aa).

Residues D9–K131 enclose the MsrB domain. Positions 48, 51, 97, and 100 each coordinate Zn(2+). C120 functions as the Nucleophile in the catalytic mechanism.

Belongs to the MsrB Met sulfoxide reductase family. Zn(2+) is required as a cofactor.

It catalyses the reaction L-methionyl-[protein] + [thioredoxin]-disulfide + H2O = L-methionyl-(R)-S-oxide-[protein] + [thioredoxin]-dithiol. The chain is Peptide methionine sulfoxide reductase MsrB from Thiobacillus denitrificans (strain ATCC 25259 / T1).